The chain runs to 624 residues: Basal cell adhesion molecule (624 aa).

A signal peptide spans 1-25; sequence MEPPDARAGLLWLTLLLSGYSGAQA. Ig-like V-type domains lie at 26–136 and 141–251; these read ELHV…SSVR and PEAT…HTFR. Residues 26–543 are Extracellular-facing; it reads ELHVSVPPRV…GSVAPQTAQA (518 aa). Intrachain disulfides connect Cys47-Cys119, Cys166-Cys231, and Cys285-Cys331. Ig-like C2-type domains lie at 268–343, 357–436, and 443–534; these read PSTT…EEVQ, PLEL…QSFQ, and PELK…FHFG. Asn315, Asn371, and Asn378 each carry an N-linked (GlcNAc...) asparagine glycan. 2 disulfides stabilise this stretch: Cys379–Cys419 and Cys468–Cys518. The disordered stretch occupies residues 477–497; the sequence is KLTWSQRGDTTPAEPPFEGRG. A helical transmembrane segment spans residues 544–564; the sequence is GVAVMAVAVSVGLLLLVVAAF. The Cytoplasmic portion of the chain corresponds to 565 to 624; that stretch reads YCMRRKGRPGCCQRAEKGAPPAREPELSHSGSERPEHTGLLMGGPSGGGRGGNGGFGDEC. A disordered region spans residues 574–624; the sequence is GCCQRAEKGAPPAREPELSHSGSERPEHTGLLMGGPSGGGRGGNGGFGDEC. Basic and acidic residues predominate over residues 587-601; the sequence is REPELSHSGSERPEH. Phosphoserine is present on residues Ser592, Ser594, and Ser596. Gly residues predominate over residues 605 to 624; sequence LMGGPSGGGRGGNGGFGDEC.

As to quaternary structure, homodimer. Interacts with ITGA4:ITGB1. Interacts with spectrins SPTA1 and SPTB1.

It is found in the cell membrane. Its function is as follows. Transmembrane glycoprotein that functions as both a receptor and an adhesion molecule playing a crucial role in cell adhesion, motility, migration and invasion. Extracellular domain enables binding to extracellular matrix proteins, such as laminin, integrin and other ligands while its intracellular domain interacts with cytoskeletal proteins like hemoglobin, facilitating cell signal transduction. Serves as a receptor for laminin alpha-5/LAMA5 to promote cell adhesion. Mechanistically, JAK2 induces BCAM phosphorylation and activates its adhesion to laminin by stimulating a Rap1/AKT signaling pathway in the absence of EPOR. The chain is Basal cell adhesion molecule (Bcam) from Rattus norvegicus (Rat).